A 145-amino-acid polypeptide reads, in one-letter code: 3-hydroxyacyl-[acyl-carrier-protein] dehydratase FabZ (145 aa).

The active site involves histidine 49.

The protein belongs to the thioester dehydratase family. FabZ subfamily.

It is found in the cytoplasm. It carries out the reaction a (3R)-hydroxyacyl-[ACP] = a (2E)-enoyl-[ACP] + H2O. Functionally, involved in unsaturated fatty acids biosynthesis. Catalyzes the dehydration of short chain beta-hydroxyacyl-ACPs and long chain saturated and unsaturated beta-hydroxyacyl-ACPs. The sequence is that of 3-hydroxyacyl-[acyl-carrier-protein] dehydratase FabZ from Ehrlichia ruminantium (strain Gardel).